The following is a 576-amino-acid chain: MKASKYILPTEKENPSDAVVASHRLMIRAGLARKSSAGLYFYLPLGLKILQKIKQIIREEMNKTGALEFDLPILTPSDFWEQSGRWTAMGKEMFRIKDRHDLSYALGPTHEESFSFLLKPLLKSYKDLPLNVYQIQTKFRDEIRPRFGVIRSREFIMKDAYSFHIDDVSLDETYQSMRAAYRKIFDRCGLKTIPVQADSGSMGGSASEEFMVVSPIGEETLLLCNSCGYSSNSEKTPLVLKKENVSSASVEKKEISTPGKKTIVEVSAFLEIPESTTIKAVTLKSEKKKILVYLRGDLELNLHKLHSLLRIVDSEPMTDAEIRELGLVPGFIAPVAPNDKVKVLYDRSLQKDFPYVVASNKEDFHTQGFVLEKEVSGLPEFADVALAREGDLCPNCNAPLKAEKGIEVGHIFKLGEKYTKAFGIQVLDQNGKARTLTMGCYGIGVNRTMATVIEQRNDEKGIFWPISIAPFEVTLVSITKGEEQYSKAEEFYNVLKNENLEVFWDDRDVGPGFKLKDSELIGFPIRVTIGKKFFENGEISIYNRKADKEESFVFAGFENLIARVESLRQELFAELE.

It belongs to the class-II aminoacyl-tRNA synthetase family. ProS type 1 subfamily. In terms of assembly, homodimer.

It is found in the cytoplasm. The catalysed reaction is tRNA(Pro) + L-proline + ATP = L-prolyl-tRNA(Pro) + AMP + diphosphate. In terms of biological role, catalyzes the attachment of proline to tRNA(Pro) in a two-step reaction: proline is first activated by ATP to form Pro-AMP and then transferred to the acceptor end of tRNA(Pro). As ProRS can inadvertently accommodate and process non-cognate amino acids such as alanine and cysteine, to avoid such errors it has two additional distinct editing activities against alanine. One activity is designated as 'pretransfer' editing and involves the tRNA(Pro)-independent hydrolysis of activated Ala-AMP. The other activity is designated 'posttransfer' editing and involves deacylation of mischarged Ala-tRNA(Pro). The misacylated Cys-tRNA(Pro) is not edited by ProRS. In Leptospira borgpetersenii serovar Hardjo-bovis (strain JB197), this protein is Proline--tRNA ligase.